Consider the following 526-residue polypeptide: Outer capsid protein VP5 (526 aa).

Residues 1–42 are involved in membrane permeabilization; that stretch reads MGKIIKSLSRFGKKVGNALTSNTAKKIYSTIGKAAERFAESE.

It belongs to the orbivirus VP5 family.

The protein localises to the virion. Functionally, VP5 protein is one of the two proteins (with VP2) which constitute the virus particle outer capsid. Acts as a membrane permeabilization protein that mediates release of viral particles from endosomal compartments into the cytoplasm. Permeabilization activity is probably negatively regulated by VP2 and is triggered by endosomal degradation of VP2 and exposure to low pH. This is Outer capsid protein VP5 (Segment-6) from Antilocapra americana (Pronghorn).